We begin with the raw amino-acid sequence, 147 residues long: Large ribosomal subunit protein uL13 (147 aa).

This sequence belongs to the universal ribosomal protein uL13 family. In terms of assembly, part of the 50S ribosomal subunit.

This protein is one of the early assembly proteins of the 50S ribosomal subunit, although it is not seen to bind rRNA by itself. It is important during the early stages of 50S assembly. The polypeptide is Large ribosomal subunit protein uL13 (Streptomyces griseus subsp. griseus (strain JCM 4626 / CBS 651.72 / NBRC 13350 / KCC S-0626 / ISP 5235)).